A 352-amino-acid chain; its full sequence is Protein SIS1 (352 aa).

The region spanning 4-70 (ETKLYDLLGV…REIYDQYGLE (67 aa)) is the J domain. Ser275 is modified (phosphoserine). Residues 300–325 (VQPVQPSQTSTYPGQGMPTPKNPSQR) are disordered. A compositionally biased stretch (polar residues) spans 301–312 (QPVQPSQTSTYP).

As to quaternary structure, interacts with polyadenylate-binding protein PAB1.

The protein localises to the cytoplasm. It localises to the nucleus. Functionally, required for nuclear migration during mitosis. It is required for the normal initiation of translation. Might mediate the dissociation of a specific protein complex of the translation machinery. Essential for viability. This Saccharomyces cerevisiae (strain ATCC 204508 / S288c) (Baker's yeast) protein is Protein SIS1 (SIS1).